The sequence spans 254 residues: Small ribosomal subunit protein uS2 (254 aa).

The protein belongs to the universal ribosomal protein uS2 family.

The chain is Small ribosomal subunit protein uS2 from Borrelia duttonii (strain Ly).